The following is a 265-amino-acid chain: tRNA pseudouridine synthase A (265 aa).

D58 (nucleophile) is an active-site residue. Y116 contributes to the substrate binding site.

It belongs to the tRNA pseudouridine synthase TruA family. Homodimer.

It catalyses the reaction uridine(38/39/40) in tRNA = pseudouridine(38/39/40) in tRNA. Its function is as follows. Formation of pseudouridine at positions 38, 39 and 40 in the anticodon stem and loop of transfer RNAs. The polypeptide is tRNA pseudouridine synthase A (Neisseria gonorrhoeae (strain ATCC 700825 / FA 1090)).